A 198-amino-acid chain; its full sequence is Cyclin-dependent kinase inhibitor 1B (198 aa).

A compositionally biased stretch (polar residues) spans 1–12 (MSNVRVSNGSPT). The tract at residues 1–30 (MSNVRVSNGSPTSERRDAKQAEYPKPSACR) is disordered. Residue serine 10 is modified to Phosphoserine; by UHMK1. Positions 13 to 22 (SERRDAKQAE) are enriched in basic and acidic residues. The tract at residues 51–91 (DMEEASQNKWNFDFQNHKPLEGKYEWQEVEKGSLPEFYYRP) is interaction with CDK2. Residue tyrosine 74 is modified to Phosphotyrosine; by SRC. A disordered region spans residues 87-198 (FYYRPPRPPK…KKPGLRRRQT (112 aa)). Tyrosine 88 carries the phosphotyrosine; by ABL, LYN and SRC modification. Tyrosine 89 is subject to Phosphotyrosine. Positions 104 to 113 (QESQDVSGTR) are enriched in polar residues. Basic and acidic residues predominate over residues 126-137 (EDTHLVDQKTDA). The short motif at 153-169 (KRPATDDSSPQNKRANR) is the Nuclear localization signal element. A Phosphothreonine; by CaMK1, PKB/AKT1 and PIM1 modification is found at threonine 157. Phosphothreonine is present on threonine 170. Polar residues predominate over residues 175–186 (SDGSPNAGSVEQ). Threonine 187 bears the Phosphothreonine; by PKB/AKT1, CDK1 and CDK2 mark. Phosphothreonine; by CaMK1, PKB/AKT1, RPS6KA1, RPS6KA3 and PIM1 is present on threonine 198.

This sequence belongs to the CDI family. In terms of assembly, forms a ternary complex composed of CCNE1, CDK2 and CDKN1B. Interacts directly with CCNE1; the interaction is inhibited by CDK2-dependent phosphorylation on Thr-187. Interacts with COPS5, subunit of the COP9 signalosome complex; the interaction leads to CDKN1B degradation. Interacts with NUP50; the interaction leads to nuclear import and degradation of phosphorylated CDKN1B. Interacts with CCND1 and SNX6. Interacts (Thr-198-phosphorylated form) with 14-3-3 proteins, binds strongly YWHAQ, weakly YWHAE and YWHAH, but not YWHAB nor YWHAZ; the interaction with YWHAQ results in translocation to the cytoplasm. Interacts with AKT1 and LYN; the interactions lead to cytoplasmic mislocation, phosphorylation of CDKN1B and inhibition of cell cycle arrest. Forms a ternary complex with CCNA2 and CDK2; CDKN1B inhibits the kinase activity of CDK2 through conformational rearrangements. Interacts (unphosphorylated form) with CDK2. Forms a complex with CDK2 and SPDYA, but does not directly interact with SPDYA. Forms a ternary complex composed of cyclin D, CDK4 and CDKN1B. Interacts (phosphorylated on Tyr-88 and Tyr-89) with CDK4; the interaction is required for cyclin D and CDK4 complex assembly, induces nuclear translocation and activates the CDK4 kinase activity. Interacts with GRB2. Interacts with PIM1. Identified in a complex with SKP1, SKP2 and CKS1B. Interacts with UHMK1; the interaction leads to cytoplasmic mislocation, phosphorylation of CDKN1B and inhibition of cell cycle arrest. Also interacts with CDK1. Dephosphorylated on Thr-187 by PPM1H, leading to CDKN1B stability. Post-translationally, phosphorylated; phosphorylation occurs on serine, threonine and tyrosine residues. Phosphorylation on Ser-10 is the major site of phosphorylation in resting cells, takes place at the G(0)-G(1) phase and leads to protein stability. Phosphorylation on other sites is greatly enhanced by mitogens, growth factors, cMYC and in certain cancer cell lines. The phosphorylated form found in the cytoplasm is inactivate. Phosphorylation on Thr-198 is required for interaction with 14-3-3 proteins. Phosphorylation on Thr-187, by CDK1 and CDK2 leads to protein ubiquitination and proteasomal degradation. Tyrosine phosphorylation promotes this process. Phosphorylation by PKB/AKT1 can be suppressed by LY294002, an inhibitor of the catalytic subunit of PI3K. Phosphorylation on Tyr-88 and Tyr-89 has no effect on binding CDK2, but is required for binding CDK4. Dephosphorylated on tyrosine residues by G-CSF. Dephosphorylated on Thr-187 by PPM1H, leading to CDKN1B stability. In terms of processing, ubiquitinated; in the cytoplasm by the KPC complex (composed of RNF123/KPC1 and UBAC1/KPC2) and, in the nucleus, by SCF(SKP2). The latter requires prior phosphorylation on Thr-187. Ubiquitinated; by a TRIM21-containing SCF(SKP2)-like complex; leads to its degradation. Subject to degradation in the lysosome. Interaction with SNX6 promotes lysosomal degradation.

The protein resides in the nucleus. The protein localises to the cytoplasm. Its subcellular location is the endosome. Its function is as follows. Important regulator of cell cycle progression. Inhibits the kinase activity of CDK2 bound to cyclin A, but has little inhibitory activity on CDK2 bound to SPDYA. Involved in G1 arrest. Potent inhibitor of cyclin E- and cyclin A-CDK2 complexes. Forms a complex with cyclin type D-CDK4 complexes and is involved in the assembly, stability, and modulation of CCND1-CDK4 complex activation. Acts either as an inhibitor or an activator of cyclin type D-CDK4 complexes depending on its phosphorylation state and/or stoichometry. This is Cyclin-dependent kinase inhibitor 1B (CDKN1B) from Canis lupus familiaris (Dog).